A 290-amino-acid chain; its full sequence is Acetyl-coenzyme A carboxylase carboxyl transferase subunit beta (290 aa).

The CoA carboxyltransferase N-terminal domain occupies 28–290 (VMTKCPQCKK…GGGESGWWRN (263 aa)). Cys32, Cys35, Cys51, and Cys54 together coordinate Zn(2+). Residues 32 to 54 (CPQCKKIMYTKELVKNLRVCLSC) form a C4-type zinc finger.

It belongs to the AccD/PCCB family. As to quaternary structure, acetyl-CoA carboxylase is a heterohexamer composed of biotin carboxyl carrier protein (AccB), biotin carboxylase (AccC) and two subunits each of ACCase subunit alpha (AccA) and ACCase subunit beta (AccD). Zn(2+) serves as cofactor.

Its subcellular location is the cytoplasm. The catalysed reaction is N(6)-carboxybiotinyl-L-lysyl-[protein] + acetyl-CoA = N(6)-biotinyl-L-lysyl-[protein] + malonyl-CoA. The protein operates within lipid metabolism; malonyl-CoA biosynthesis; malonyl-CoA from acetyl-CoA: step 1/1. Its function is as follows. Component of the acetyl coenzyme A carboxylase (ACC) complex. Biotin carboxylase (BC) catalyzes the carboxylation of biotin on its carrier protein (BCCP) and then the CO(2) group is transferred by the transcarboxylase to acetyl-CoA to form malonyl-CoA. This chain is Acetyl-coenzyme A carboxylase carboxyl transferase subunit beta, found in Geobacillus thermodenitrificans (strain NG80-2).